Here is a 457-residue protein sequence, read N- to C-terminus: Serine--tRNA ligase (457 aa).

252–254 lines the L-serine pocket; sequence TAE. Residues 283–285 and Val-299 each bind ATP; that span reads RKE. Glu-306 lines the L-serine pocket. 370 to 373 provides a ligand contact to ATP; that stretch reads EMVS. Residue Thr-406 coordinates L-serine.

The protein belongs to the class-II aminoacyl-tRNA synthetase family. Type-1 seryl-tRNA synthetase subfamily. In terms of assembly, homodimer. The tRNA molecule binds across the dimer.

It localises to the cytoplasm. The enzyme catalyses tRNA(Ser) + L-serine + ATP = L-seryl-tRNA(Ser) + AMP + diphosphate + H(+). It carries out the reaction tRNA(Sec) + L-serine + ATP = L-seryl-tRNA(Sec) + AMP + diphosphate + H(+). It functions in the pathway aminoacyl-tRNA biosynthesis; selenocysteinyl-tRNA(Sec) biosynthesis; L-seryl-tRNA(Sec) from L-serine and tRNA(Sec): step 1/1. Functionally, catalyzes the attachment of serine to tRNA(Ser). Is also able to aminoacylate tRNA(Sec) with serine, to form the misacylated tRNA L-seryl-tRNA(Sec), which will be further converted into selenocysteinyl-tRNA(Sec). This Saccharolobus islandicus (strain M.14.25 / Kamchatka #1) (Sulfolobus islandicus) protein is Serine--tRNA ligase.